The chain runs to 193 residues: MAAIRKKLVIVGDGACGKTCLLIVFSKDQFPEVYVPTVFENYIADIEVDGKQVELALWDTAGQEDYDRLRPLSYPDTDVILMCFSIDSPDSLENIPEKWTPEVKHFCPNVPIILVGNKKDLRNDEHTRRELAKMKQEPVKPEEGRDMANRINAFGYLECSAKTKEGVREVFEMATRAGLQVRKNKKRRGCPLL.

12-19 is a GTP binding site; the sequence is GDGACGKT. An Effector region motif is present at residues 34-42; sequence YVPTVFENY. Position 41 is an ADP-ribosylasparagine; by botulinum toxin (N41). Residues 59–63 and 117–120 each bind GTP; these read DTAGQ and NKKD. At C190 the chain carries Cysteine methyl ester. Residue C190 is the site of S-geranylgeranyl cysteine attachment. A propeptide spans 191–193 (removed in mature form); sequence PLL.

This sequence belongs to the small GTPase superfamily. Rho family.

Its subcellular location is the cell membrane. The protein localises to the cleavage furrow. Its function is as follows. Regulates a signal transduction pathway linking plasma membrane receptors to the assembly of focal adhesions and actin stress fibers. Serves as a microtubule-dependent signal that is required for the myosin contractile ring formation during cell cycle cytokinesis. Regulates apical junction formation in bronchial epithelial cells. The protein is Rho-related GTP-binding protein RhoC (RHOC) of Gallus gallus (Chicken).